The sequence spans 511 residues: Cobyric acid synthase (511 aa).

The 193-residue stretch at 251–443 (LLDIAIICLP…IHGIFDNDIF (193 aa)) folds into the GATase cobBQ-type domain. The Nucleophile role is filled by C332. H435 is a catalytic residue.

It belongs to the CobB/CobQ family. CobQ subfamily.

It functions in the pathway cofactor biosynthesis; adenosylcobalamin biosynthesis. In terms of biological role, catalyzes amidations at positions B, D, E, and G on adenosylcobyrinic A,C-diamide. NH(2) groups are provided by glutamine, and one molecule of ATP is hydrogenolyzed for each amidation. The sequence is that of Cobyric acid synthase from Listeria innocua serovar 6a (strain ATCC BAA-680 / CLIP 11262).